Consider the following 129-residue polypeptide: Glycine cleavage system H protein (129 aa).

Positions 24–106 (LVRIGISAFA…HGEGWLLLVK (83 aa)) constitute a Lipoyl-binding domain. The residue at position 65 (Lys65) is an N6-lipoyllysine.

It belongs to the GcvH family. In terms of assembly, the glycine cleavage system is composed of four proteins: P, T, L and H. Requires (R)-lipoate as cofactor.

In terms of biological role, the glycine cleavage system catalyzes the degradation of glycine. The H protein shuttles the methylamine group of glycine from the P protein to the T protein. In Prochlorococcus marinus (strain SARG / CCMP1375 / SS120), this protein is Glycine cleavage system H protein.